The sequence spans 230 residues: Prolactin-3D1 (230 aa).

The signal sequence occupies residues 1–29 (MQLTLTLSRASGMQLFLLVSSLLLWEKVA). Cystine bridges form between C81-C200 and C217-C225. 2 N-linked (GlcNAc...) asparagine glycosylation sites follow: N109 and N158.

It belongs to the somatotropin/prolactin family.

It localises to the secreted. The sequence is that of Prolactin-3D1 (Prl3d1) from Rattus norvegicus (Rat).